We begin with the raw amino-acid sequence, 146 residues long: Hemoglobin subunit beta-1 (146 aa).

Residues 2–146 form the Globin domain; sequence GLTAHDRQLI…IADALGKGYH (145 aa). Heme b is bound by residues histidine 63 and histidine 92.

Belongs to the globin family. Heterotetramer of two alpha chains and two beta chains. As to expression, red blood cells.

In terms of biological role, involved in oxygen transport from the lung to the various peripheral tissues. The polypeptide is Hemoglobin subunit beta-1 (hbb1) (Xenopus laevis (African clawed frog)).